The chain runs to 485 residues: dTDP-4-amino-4,6-dideoxy-D-glucose ammonia-lyase (485 aa).

Positions 141, 145, and 148 each coordinate [4Fe-4S] cluster.

The protein belongs to the radical SAM superfamily. DesII family. Monomer. Requires [4Fe-4S] cluster as cofactor.

The catalysed reaction is dTDP-4-amino-4,6-dideoxy-alpha-D-glucose + AH2 + S-adenosyl-L-methionine = dTDP-3-dehydro-4,6-dideoxy-alpha-D-glucose + 5'-deoxyadenosine + L-methionine + A + NH4(+) + H(+). Functionally, involved in the biosynthesis of dTDP-alpha-D-desosamine, a sugar found in several bacterial macrolide antibiotics. Catalyzes the SAM-dependent deamination of dTDP-4-amino-4,6-deoxyglucose (dTDP-viosamine) to yield dTDP-3-keto-4,6-deoxyglucose. It can also catalyze the oxidative dehydrogenation of the non-physiological substrate dTDP-D-quinovose to dTDP-3-keto-6-deoxy-d-glucose. It can also deaminate dTDP-3-amino-3,6-deoxyglucose. The protein is dTDP-4-amino-4,6-dideoxy-D-glucose ammonia-lyase of Streptomyces venezuelae.